A 180-amino-acid polypeptide reads, in one-letter code: Bifunctional protein PyrR (180 aa).

Substrate is bound by residues 39–40 (TR), 103–111 (DDVLYTGRT), and arginine 136. Residues 99–111 (VILIDDVLYTGRT) carry the PRPP-binding motif.

The protein belongs to the purine/pyrimidine phosphoribosyltransferase family. PyrR subfamily. In terms of assembly, homodimer and homohexamer; in equilibrium.

It catalyses the reaction UMP + diphosphate = 5-phospho-alpha-D-ribose 1-diphosphate + uracil. In terms of biological role, regulates transcriptional attenuation of the pyrimidine nucleotide (pyr) operon by binding in a uridine-dependent manner to specific sites on pyr mRNA. This disrupts an antiterminator hairpin in the RNA and favors formation of a downstream transcription terminator, leading to a reduced expression of downstream genes. Its function is as follows. Also displays a weak uracil phosphoribosyltransferase activity which is not physiologically significant. The chain is Bifunctional protein PyrR from Halalkalibacterium halodurans (strain ATCC BAA-125 / DSM 18197 / FERM 7344 / JCM 9153 / C-125) (Bacillus halodurans).